The sequence spans 1427 residues: DNA-directed RNA polymerase subunit beta' (1427 aa).

Zn(2+)-binding residues include C70, C72, C85, and C88. The Mg(2+) site is built by D461, D463, and D465. Positions 810, 884, 891, and 894 each coordinate Zn(2+). 2 disordered regions span residues 1044 to 1065 (QTDE…AGRG) and 1394 to 1427 (PEAA…GDEA).

The protein belongs to the RNA polymerase beta' chain family. The RNAP catalytic core consists of 2 alpha, 1 beta, 1 beta' and 1 omega subunit. When a sigma factor is associated with the core the holoenzyme is formed, which can initiate transcription. The cofactor is Mg(2+). Zn(2+) serves as cofactor.

It carries out the reaction RNA(n) + a ribonucleoside 5'-triphosphate = RNA(n+1) + diphosphate. In terms of biological role, DNA-dependent RNA polymerase catalyzes the transcription of DNA into RNA using the four ribonucleoside triphosphates as substrates. This chain is DNA-directed RNA polymerase subunit beta', found in Novosphingobium aromaticivorans (strain ATCC 700278 / DSM 12444 / CCUG 56034 / CIP 105152 / NBRC 16084 / F199).